Reading from the N-terminus, the 255-residue chain is Type III pantothenate kinase (255 aa).

An ATP-binding site is contributed by 6–13; that stretch reads DVGNTNIV. Substrate contacts are provided by residues tyrosine 100 and 107–110; that span reads GADR. Aspartate 109 serves as the catalytic Proton acceptor. Position 129 (aspartate 129) interacts with K(+). Threonine 132 contacts ATP. Residue threonine 184 coordinates substrate.

The protein belongs to the type III pantothenate kinase family. Homodimer. It depends on NH4(+) as a cofactor. K(+) serves as cofactor.

It is found in the cytoplasm. It carries out the reaction (R)-pantothenate + ATP = (R)-4'-phosphopantothenate + ADP + H(+). Its pathway is cofactor biosynthesis; coenzyme A biosynthesis; CoA from (R)-pantothenate: step 1/5. Functionally, catalyzes the phosphorylation of pantothenate (Pan), the first step in CoA biosynthesis. This Geobacter sulfurreducens (strain ATCC 51573 / DSM 12127 / PCA) protein is Type III pantothenate kinase.